The chain runs to 264 residues: Cercarial protease (264 aa).

Residues 1-19 form the signal peptide; that stretch reads MSNRWRFVVVVTLFTYCLT. Positions 20 to 27 are excised as a propeptide; that stretch reads FERVSTWL. A Peptidase S1 domain is found at 28–264; sequence IRSGEPVQHP…RMLDFVRSNI (237 aa). Cys53 and Cys69 are joined by a disulfide. Residues His68 and Asp126 each act as charge relay system in the active site. Cys192 and Cys202 form a disulfide bridge. Ser218 serves as the catalytic Charge relay system.

Belongs to the peptidase S1 family. Acetabular (penetration) glands.

With respect to regulation, activated by an autocatalytic mechanism. This protease cleaves elastin and thus facilitates penetration of schistosome parasite larvae through elastin-rich tissue of the host. In Schistosoma mansoni (Blood fluke), this protein is Cercarial protease.